Here is a 451-residue protein sequence, read N- to C-terminus: Phosphoglucosamine mutase (451 aa).

Ser102 acts as the Phosphoserine intermediate in catalysis. Positions 102, 243, 245, and 247 each coordinate Mg(2+). Ser102 is subject to Phosphoserine.

The protein belongs to the phosphohexose mutase family. Requires Mg(2+) as cofactor. In terms of processing, activated by phosphorylation.

It catalyses the reaction alpha-D-glucosamine 1-phosphate = D-glucosamine 6-phosphate. Functionally, catalyzes the conversion of glucosamine-6-phosphate to glucosamine-1-phosphate. The sequence is that of Phosphoglucosamine mutase from Sinorhizobium medicae (strain WSM419) (Ensifer medicae).